Reading from the N-terminus, the 122-residue chain is Large ribosomal subunit protein bL12 (122 aa).

Belongs to the bacterial ribosomal protein bL12 family. As to quaternary structure, homodimer. Part of the ribosomal stalk of the 50S ribosomal subunit. Forms a multimeric L10(L12)X complex, where L10 forms an elongated spine to which 2 to 4 L12 dimers bind in a sequential fashion. Binds GTP-bound translation factors.

Its function is as follows. Forms part of the ribosomal stalk which helps the ribosome interact with GTP-bound translation factors. Is thus essential for accurate translation. In Buchnera aphidicola subsp. Acyrthosiphon pisum (strain Tuc7), this protein is Large ribosomal subunit protein bL12.